The chain runs to 884 residues: Probable ribonuclease ZC3H12C (884 aa).

The segment at 66-108 (KPTMDTVNSGKEGKGVSEENVSSGDSEGSTSSDHESEQLSSLS) is disordered. Residues 87–96 (SSGDSEGSTS) show a composition bias toward low complexity. At S231 the chain carries Phosphoserine. In terms of domain architecture, RNase NYN spans 246 to 401 (LRPVVIDGSN…LGRHGPSLDN (156 aa)). The segment at 411-436 (EHKKQPCPYGKKCTYGHKCKYYHPER) adopts a C3H1-type zinc-finger fold. The span at 456-478 (AAKTTNEGGLVKSNSVPCSTKAD) shows a compositional bias: polar residues. Disordered regions lie at residues 456-548 (AAKT…SGVH), 716-739 (VGAR…KAPH), and 755-776 (SRLY…EGLG). A compositionally biased stretch (basic and acidic residues) spans 500–516 (VYQDIEEKLPTKNKLET). Residues 518 to 543 (SVPSLVSIPATSTAKPQSTTPLSNGL) show a composition bias toward polar residues.

Belongs to the ZC3H12 family. The cofactor is Mg(2+).

May function as RNase and regulate the levels of target RNA species. The protein is Probable ribonuclease ZC3H12C (Zc3h12c) of Mus musculus (Mouse).